The primary structure comprises 97 residues: Large ribosomal subunit protein eL21 (97 aa).

The tract at residues 1–24 (MQKSEGFRSKTRYKLQKHPRQKGM) is disordered. A compositionally biased stretch (basic residues) spans 9–21 (SKTRYKLQKHPRQ).

It belongs to the eukaryotic ribosomal protein eL21 family.

This chain is Large ribosomal subunit protein eL21, found in Methanococcus maripaludis (strain DSM 14266 / JCM 13030 / NBRC 101832 / S2 / LL).